Consider the following 389-residue polypeptide: Tubby-like F-box protein 11 (389 aa).

The region spanning 36–82 (DYRWSEIPEELLREILIRVEAADGGGWPSRRSVVACAGVCRGWRLLM) is the F-box domain. Residues 250-289 (STMEPQGVASEPSEFPLLGTRSTLSRSQSKPLRSSSSHLK) are disordered. Positions 273–286 (LSRSQSKPLRSSSS) are enriched in low complexity.

This sequence belongs to the TUB family. Ubiquitous.

The sequence is that of Tubby-like F-box protein 11 from Arabidopsis thaliana (Mouse-ear cress).